Here is a 654-residue protein sequence, read N- to C-terminus: MLLRPNSGNTLKYGCLLTKRWLTTSKLLYSVEDMKIKIGQEQYRKALEERIDKIPIENYRNFSIVAHVDHGKSTLSDRLLEMTGVIKPGSKSQVLDKLDVERERGITVKAQTVSMFYNDGKQDYLLHLVDTPGHVDFRAEVSRSYASCGGALLLVDASQGVQAQTVANFYLAYSMGLKLIPIINKIDLDSANIPGAREQIETTFELDPNECIPVSAKTGLNVEQIIPSVIKNIPSPVCDVNKPLRALLVDSWHDPYVGVVMLVHIVDGRMKKGMKILSAHTNRTYDVKEVGIMYPDRTPTSFIKAGQVAYIIPGMKNPREALVGDTFYQMGKHEGLEPLPGFEEPKPMVFVGAFPADGKEFNAMDDQMQNLVLNDRSVTLEQETSNALGLGWRLGFLGSLHASVFKERLEKEYGAKIILTAPTVPYKIIYKNGEEKIVTNPDDFPDNQKHHDVESYMEPYVEAIMTVPNEYVGNVMTLCLNNRGEQKEIEYLTTGQVLLKYEIPTSQLVEDFFGKLKGCTKGYASLDYEEAGYRKSDIVKMQLCVNGEPQDALTTVIHRSQAQARGKEYVTRFKKFLSYQLFEVAIQAKINNKVVARETIKAKRKDVTQRLHAADISRYKKLLERQKEGKKQMKLSGRVTIKNDAYQAFLRRED.

One can recognise a tr-type G domain in the interval 57 to 237 (ENYRNFSIVA…SVIKNIPSPV (181 aa)). Residues 66 to 73 (AHVDHGKS), 130 to 134 (DTPGH), and 184 to 187 (NKID) contribute to the GTP site.

This sequence belongs to the TRAFAC class translation factor GTPase superfamily. Classic translation factor GTPase family. LepA subfamily.

The protein localises to the mitochondrion inner membrane. It carries out the reaction GTP + H2O = GDP + phosphate + H(+). In terms of biological role, promotes mitochondrial protein synthesis. May act as a fidelity factor of the translation reaction, by catalyzing a one-codon backward translocation of tRNAs on improperly translocated ribosomes. Binds to mitochondrial ribosomes in a GTP-dependent manner. This chain is Translation factor GUF1, mitochondrial, found in Candida albicans (strain SC5314 / ATCC MYA-2876) (Yeast).